We begin with the raw amino-acid sequence, 468 residues long: Glutamate--tRNA ligase (468 aa).

A 'HIGH' region motif is present at residues P11–N21. The 'KMSKS' region signature appears at K243–R247. K246 contributes to the ATP binding site.

This sequence belongs to the class-I aminoacyl-tRNA synthetase family. Glutamate--tRNA ligase type 1 subfamily. Monomer.

The protein resides in the cytoplasm. The enzyme catalyses tRNA(Glu) + L-glutamate + ATP = L-glutamyl-tRNA(Glu) + AMP + diphosphate. Catalyzes the attachment of glutamate to tRNA(Glu) in a two-step reaction: glutamate is first activated by ATP to form Glu-AMP and then transferred to the acceptor end of tRNA(Glu). This Cupriavidus pinatubonensis (strain JMP 134 / LMG 1197) (Cupriavidus necator (strain JMP 134)) protein is Glutamate--tRNA ligase.